Consider the following 81-residue polypeptide: Styelin-D (81 aa).

An N-terminal signal peptide occupies residues 1–22; the sequence is MQMKATILIVLVALFMIQQSEA. W24 is subject to 6'-bromotryptophan. A 3,4-dihydroxyarginine modification is found at R26. 4,5-dihydroxylysine occurs at positions 27, 30, and 34. 3',4'-dihydroxyphenylalanine occurs at positions 36 and 37. Residue K38 is modified to 4,5-dihydroxylysine. The residue at position 40 (K40) is a 5-hydroxylysine. A 3',4'-dihydroxyphenylalanine mark is found at Y41 and Y42. K44 bears the 5-hydroxylysine mark. The residue at position 54 (L54) is a Leucine amide. Residues 56 to 81 constitute a propeptide, removed in mature form; that stretch reads DMTDEEFQDFMKEVEQAREEELQSRQ.

In terms of processing, contains L-DOPA (3',4'-dihydroxyphenylalanine). As to expression, hemocytes and pharyngeal tissues.

Its subcellular location is the secreted. Bactericidal against several Gram-positive and Gram-negative bacteria. Plays a significant role in the innate immune mechanisms of S.clava. The sequence is that of Styelin-D from Styela clava (Sea squirt).